The chain runs to 196 residues: DnaA initiator-associating protein DiaA (196 aa).

Residues 34–196 enclose the SIS domain; the sequence is LVQSLLNGNK…DSTLFPHQDE (163 aa).

Belongs to the SIS family. DiaA subfamily. In terms of assembly, homotetramer; dimer of dimers.

In terms of biological role, required for the timely initiation of chromosomal replication via direct interactions with the DnaA initiator protein. The sequence is that of DnaA initiator-associating protein DiaA from Serratia proteamaculans (strain 568).